A 75-amino-acid chain; its full sequence is MYB-like transcription factor ETC3 (75 aa).

The interval 1–20 (MDNHRRTKQPKTNSIVTSSS) is disordered. In terms of domain architecture, Myb-like spans 34–71 (SQEEEDLVSRMHKLVGDRWELIAGRIPGRTAGEIERFW).

Expressed in leaf epidermal cells, stomate guard cells in leaves, cotyledons and hypocotyls, inflorescences, developing seeds and siliques.

Its subcellular location is the nucleus. Its function is as follows. MYB-type transcription factor involved in epidermal cell fate specification. Acts as a negative regulator of trichome development, including endoreplication, by mediating lateral inhibition. Promotes the formation of hair developing cells in H position in root epidermis, probably by inhibiting non-hair cell formation. May have pleiotropic effects on flowering development and epidermal cell size through the regulation of endoreduplication. The protein is MYB-like transcription factor ETC3 (ETC3) of Arabidopsis thaliana (Mouse-ear cress).